The primary structure comprises 770 residues: Semaphorin-4F (770 aa).

Residues 1 to 34 (MPASAARPRPGPGQPTASPFPLLLLAVLSGPVSG) form the signal peptide. Over 35–659 (RVPRSVPRTS…RDAPSRAHTV (625 aa)) the chain is Extracellular. A Sema domain is found at 42–510 (RTSLPISEAD…SRTEVTQVNT (469 aa)). A glycan (N-linked (GlcNAc...) asparagine) is linked at N64. C112 and C122 are disulfide-bonded. An N-linked (GlcNAc...) asparagine glycan is attached at N133. Intrachain disulfides connect C140/C149, C273/C384, and C297/C343. N-linked (GlcNAc...) asparagine glycosylation occurs at N509. A PSI domain is found at 512-563 (NCGRLQSCSECILAQDPVCAWSFRLDECVAHAGEHRGLVQDIESADVSSLCP). 3 cysteine pairs are disulfide-bonded: C513–C530, C522–C539, and C587–C628. The region spanning 580–635 (AAHVVLPCSPSSAWASCVWHQPSGVTALTPRRDGLEVVVTPGAMGAYACECQEGGA) is the Ig-like C2-type domain. A helical transmembrane segment spans residues 660 to 680 (GAGLAGFFLGILAASLTLILI). Topologically, residues 681-770 (GRRQQRRRQR…PLATCDETSI (90 aa)) are cytoplasmic. A disordered region spans residues 696–725 (DKVGLDLGAPPSGTTSYSQDPPSPSPEDER). 2 positions are modified to phosphoserine: S718 and S720. The PDZ-binding motif lies at 768-770 (TSI).

This sequence belongs to the semaphorin family. As to quaternary structure, interacts (via PDZ-binding motif) with DLG4/SAP90 (via PDZ domain 2); this interaction may promote translocation of DLG4/SAP90 to the membrane.

It is found in the cell membrane. Its subcellular location is the postsynaptic density. The protein resides in the perikaryon. The protein localises to the cell projection. It localises to the dendrite. In terms of biological role, probable cell surface receptor that regulates oligodendroglial precursor cell migration. Might also regulate differentiation of oligodendroglial precursor cells. Has growth cone collapse activity against retinal ganglion-cell axons. This chain is Semaphorin-4F (SEMA4F), found in Homo sapiens (Human).